A 289-amino-acid polypeptide reads, in one-letter code: Bifunctional protein FolD (289 aa).

NADP(+) is bound by residues 166–168 and isoleucine 232; that span reads GVS.

It belongs to the tetrahydrofolate dehydrogenase/cyclohydrolase family. In terms of assembly, homodimer.

It carries out the reaction (6R)-5,10-methylene-5,6,7,8-tetrahydrofolate + NADP(+) = (6R)-5,10-methenyltetrahydrofolate + NADPH. The catalysed reaction is (6R)-5,10-methenyltetrahydrofolate + H2O = (6R)-10-formyltetrahydrofolate + H(+). It functions in the pathway one-carbon metabolism; tetrahydrofolate interconversion. Catalyzes the oxidation of 5,10-methylenetetrahydrofolate to 5,10-methenyltetrahydrofolate and then the hydrolysis of 5,10-methenyltetrahydrofolate to 10-formyltetrahydrofolate. The chain is Bifunctional protein FolD from Methylobacillus flagellatus (strain ATCC 51484 / DSM 6875 / VKM B-1610 / KT).